A 564-amino-acid polypeptide reads, in one-letter code: Urocanate hydratase (564 aa).

Residues glycine 58–glycine 59, glutamine 136, glycine 182–glycine 184, glutamate 202, arginine 207, asparagine 245–alanine 246, glutamine 266–histidine 270, tyrosine 276–leucine 277, and tyrosine 325 contribute to the NAD(+) site. Cysteine 413 is an active-site residue. Glycine 495 is a binding site for NAD(+).

It belongs to the urocanase family. Requires NAD(+) as cofactor.

It is found in the cytoplasm. It carries out the reaction 4-imidazolone-5-propanoate = trans-urocanate + H2O. Its pathway is amino-acid degradation; L-histidine degradation into L-glutamate; N-formimidoyl-L-glutamate from L-histidine: step 2/3. Functionally, catalyzes the conversion of urocanate to 4-imidazolone-5-propionate. In Vibrio atlanticus (strain LGP32) (Vibrio splendidus (strain Mel32)), this protein is Urocanate hydratase.